A 289-amino-acid polypeptide reads, in one-letter code: UPF0761 membrane protein ESA_04062 (289 aa).

A run of 6 helical transmembrane segments spans residues 44-64 (LLSL…FPMF), 104-124 (VGAL…DSAL), 140-160 (FAVY…SLVI), 183-203 (IFPL…VPTT), 215-235 (LVAA…ITMF), and 244-264 (VLAV…IVLL).

Belongs to the UPF0761 family.

The protein resides in the cell inner membrane. This Cronobacter sakazakii (strain ATCC BAA-894) (Enterobacter sakazakii) protein is UPF0761 membrane protein ESA_04062.